The chain runs to 130 residues: UPF0146 protein AF_0739.1 (130 aa).

The protein belongs to the UPF0146 family.

This Archaeoglobus fulgidus (strain ATCC 49558 / DSM 4304 / JCM 9628 / NBRC 100126 / VC-16) protein is UPF0146 protein AF_0739.1.